A 201-amino-acid chain; its full sequence is Holliday junction branch migration complex subunit RuvA (201 aa).

A domain I region spans residues 1-64 (MIGRLRGTLA…EDAQLLYGFA (64 aa)). Residues 65-143 (EKRERELFRE…AWESMPAIAT (79 aa)) are domain II. Residues 144-152 (LVVEPGSKT) are flexible linker. The interval 153 to 201 (AVTSAENDAVSALISLGFKPQEASRAVSAIQEENLSSEEMIRRALKGMV) is domain III.

The protein belongs to the RuvA family. Homotetramer. Forms an RuvA(8)-RuvB(12)-Holliday junction (HJ) complex. HJ DNA is sandwiched between 2 RuvA tetramers; dsDNA enters through RuvA and exits via RuvB. An RuvB hexamer assembles on each DNA strand where it exits the tetramer. Each RuvB hexamer is contacted by two RuvA subunits (via domain III) on 2 adjacent RuvB subunits; this complex drives branch migration. In the full resolvosome a probable DNA-RuvA(4)-RuvB(12)-RuvC(2) complex forms which resolves the HJ.

It is found in the cytoplasm. Functionally, the RuvA-RuvB-RuvC complex processes Holliday junction (HJ) DNA during genetic recombination and DNA repair, while the RuvA-RuvB complex plays an important role in the rescue of blocked DNA replication forks via replication fork reversal (RFR). RuvA specifically binds to HJ cruciform DNA, conferring on it an open structure. The RuvB hexamer acts as an ATP-dependent pump, pulling dsDNA into and through the RuvAB complex. HJ branch migration allows RuvC to scan DNA until it finds its consensus sequence, where it cleaves and resolves the cruciform DNA. The polypeptide is Holliday junction branch migration complex subunit RuvA (Stutzerimonas stutzeri (strain A1501) (Pseudomonas stutzeri)).